The following is a 382-amino-acid chain: Dual-specificity RNA methyltransferase RlmN (382 aa).

The Proton acceptor role is filled by Glu113. The region spanning 119-358 (EINRATLCIS…TTIRKQRGID (240 aa)) is the Radical SAM core domain. Cys126 and Cys363 are joined by a disulfide. [4Fe-4S] cluster is bound by residues Cys133, Cys137, and Cys140. S-adenosyl-L-methionine-binding positions include 187 to 188 (GE), Ser219, 241 to 243 (SLH), and Asn320. The active-site S-methylcysteine intermediate is the Cys363.

This sequence belongs to the radical SAM superfamily. RlmN family. [4Fe-4S] cluster is required as a cofactor.

It is found in the cytoplasm. The catalysed reaction is adenosine(2503) in 23S rRNA + 2 reduced [2Fe-2S]-[ferredoxin] + 2 S-adenosyl-L-methionine = 2-methyladenosine(2503) in 23S rRNA + 5'-deoxyadenosine + L-methionine + 2 oxidized [2Fe-2S]-[ferredoxin] + S-adenosyl-L-homocysteine. It carries out the reaction adenosine(37) in tRNA + 2 reduced [2Fe-2S]-[ferredoxin] + 2 S-adenosyl-L-methionine = 2-methyladenosine(37) in tRNA + 5'-deoxyadenosine + L-methionine + 2 oxidized [2Fe-2S]-[ferredoxin] + S-adenosyl-L-homocysteine. Functionally, specifically methylates position 2 of adenine 2503 in 23S rRNA and position 2 of adenine 37 in tRNAs. m2A2503 modification seems to play a crucial role in the proofreading step occurring at the peptidyl transferase center and thus would serve to optimize ribosomal fidelity. This is Dual-specificity RNA methyltransferase RlmN from Wigglesworthia glossinidia brevipalpis.